The chain runs to 385 residues: Lipid-A-disaccharide synthase (385 aa).

This sequence belongs to the LpxB family.

It carries out the reaction a lipid X + a UDP-2-N,3-O-bis[(3R)-3-hydroxyacyl]-alpha-D-glucosamine = a lipid A disaccharide + UDP + H(+). It functions in the pathway bacterial outer membrane biogenesis; LPS lipid A biosynthesis. Condensation of UDP-2,3-diacylglucosamine and 2,3-diacylglucosamine-1-phosphate to form lipid A disaccharide, a precursor of lipid A, a phosphorylated glycolipid that anchors the lipopolysaccharide to the outer membrane of the cell. This is Lipid-A-disaccharide synthase from Xylella fastidiosa (strain M23).